We begin with the raw amino-acid sequence, 406 residues long: 8-amino-7-oxononanoate synthase (406 aa).

Arg-20 provides a ligand contact to substrate. Residue 116–117 (GY) coordinates pyridoxal 5'-phosphate. His-141 lines the substrate pocket. Positions 187, 215, and 243 each coordinate pyridoxal 5'-phosphate. Residue Lys-246 is modified to N6-(pyridoxal phosphate)lysine. Thr-366 contacts substrate.

It belongs to the class-II pyridoxal-phosphate-dependent aminotransferase family. BioF subfamily. As to quaternary structure, homodimer. The cofactor is pyridoxal 5'-phosphate.

It carries out the reaction 6-carboxyhexanoyl-[ACP] + L-alanine + H(+) = (8S)-8-amino-7-oxononanoate + holo-[ACP] + CO2. It participates in cofactor biosynthesis; biotin biosynthesis. In terms of biological role, catalyzes the decarboxylative condensation of pimeloyl-[acyl-carrier protein] and L-alanine to produce 8-amino-7-oxononanoate (AON), [acyl-carrier protein], and carbon dioxide. This chain is 8-amino-7-oxononanoate synthase, found in Cupriavidus metallidurans (strain ATCC 43123 / DSM 2839 / NBRC 102507 / CH34) (Ralstonia metallidurans).